A 488-amino-acid chain; its full sequence is Inosine-5'-monophosphate dehydrogenase (488 aa).

CBS domains are found at residues 95–153 (VISN…SIKI) and 157–216 (MTQE…AKDE). NAD(+)-binding positions include Asp-250 and 300–302 (GIG). Residues Gly-302 and Gly-304 each contribute to the K(+) site. Ser-305 is an IMP binding site. Position 307 (Cys-307) interacts with K(+). Cys-307 serves as the catalytic Thioimidate intermediate. Residues 340–342 (DGG), 363–364 (GS), and 387–391 (YRGMG) contribute to the IMP site. Catalysis depends on Arg-403, which acts as the Proton acceptor. Glu-417 contributes to the IMP binding site. Positions 468–488 (GLAESHPHNIQITKESPNYSF) are disordered. 3 residues coordinate K(+): Glu-471, Ser-472, and His-473. Residues 475-488 (HNIQITKESPNYSF) show a composition bias toward polar residues.

This sequence belongs to the IMPDH/GMPR family. Homotetramer. K(+) is required as a cofactor.

The enzyme catalyses IMP + NAD(+) + H2O = XMP + NADH + H(+). The protein operates within purine metabolism; XMP biosynthesis via de novo pathway; XMP from IMP: step 1/1. Its activity is regulated as follows. Mycophenolic acid (MPA) is a non-competitive inhibitor that prevents formation of the closed enzyme conformation by binding to the same site as the amobile flap. In contrast, mizoribine monophosphate (MZP) is a competitive inhibitor that induces the closed conformation. MPA is a potent inhibitor of mammalian IMPDHs but a poor inhibitor of the bacterial enzymes. MZP is a more potent inhibitor of bacterial IMPDH. Catalyzes the conversion of inosine 5'-phosphate (IMP) to xanthosine 5'-phosphate (XMP), the first committed and rate-limiting step in the de novo synthesis of guanine nucleotides, and therefore plays an important role in the regulation of cell growth. This is Inosine-5'-monophosphate dehydrogenase from Staphylococcus aureus (strain MW2).